Consider the following 1024-residue polypeptide: Beta-galactosidase (1024 aa).

Substrate is bound by residues Asn-103 and Asp-202. Asp-202 lines the Na(+) pocket. Mg(2+)-binding residues include Glu-417, His-419, and Glu-462. Residues Glu-462 and 538-541 (EYAH) contribute to the substrate site. Catalysis depends on Glu-462, which acts as the Proton donor. The active-site Nucleophile is Glu-538. Position 598 (Asn-598) interacts with Mg(2+). Residues Phe-602 and Asn-605 each contribute to the Na(+) site. Asn-605 and Trp-1000 together coordinate substrate.

It belongs to the glycosyl hydrolase 2 family. Homotetramer. Mg(2+) serves as cofactor. Na(+) is required as a cofactor.

It catalyses the reaction Hydrolysis of terminal non-reducing beta-D-galactose residues in beta-D-galactosides.. The chain is Beta-galactosidase from Escherichia coli O17:K52:H18 (strain UMN026 / ExPEC).